The sequence spans 241 residues: uncharacterized protein (241 aa).

Positions 19 to 53 (KRIGYGMGEKSSAGSSRDQTYSVKPASDVKDKKKV) are disordered. Residues 30–39 (SAGSSRDQTY) show a composition bias toward polar residues.

This is an uncharacterized protein from Ostreid herpesvirus 1 (isolate France) (OsHV-1).